The following is a 187-amino-acid chain: UPF0301 protein HS_0009 (187 aa).

It belongs to the UPF0301 (AlgH) family.

In Histophilus somni (strain 129Pt) (Haemophilus somnus), this protein is UPF0301 protein HS_0009.